Consider the following 234-residue polypeptide: LexA repressor (234 aa).

The tract at residues 1 to 29 (MSDAANPEGHKRSLPGRPPGIRADSSGLT) is disordered. Positions 52–72 (MREIGQAVGLSSTSSVAHQLM) form a DNA-binding region, H-T-H motif. Residues 90–109 (YEVRGSDQAASVQPTDTAGK) form a disordered region. Catalysis depends on for autocatalytic cleavage activity residues S158 and K195.

The protein belongs to the peptidase S24 family. Homodimer.

It carries out the reaction Hydrolysis of Ala-|-Gly bond in repressor LexA.. Its function is as follows. Represses a number of genes involved in the response to DNA damage (SOS response), including recA and lexA. In the presence of single-stranded DNA, RecA interacts with LexA causing an autocatalytic cleavage which disrupts the DNA-binding part of LexA, leading to derepression of the SOS regulon and eventually DNA repair. The chain is LexA repressor from Streptomyces coelicolor (strain ATCC BAA-471 / A3(2) / M145).